The primary structure comprises 54 residues: Large ribosomal subunit protein bL32c (54 aa).

Belongs to the bacterial ribosomal protein bL32 family.

The protein resides in the plastid. It is found in the chloroplast. This is Large ribosomal subunit protein bL32c from Cucumis sativus (Cucumber).